Consider the following 598-residue polypeptide: Replication protein E1 (598 aa).

Residues 76–78 (KRK) carry the Nuclear localization signal motif. 2 positions are modified to phosphoserine; by host: S82 and S91. The Nuclear export signal motif lies at 90-99 (LSPQLQAVKI). The tract at residues 138–302 (SQDGGGDINL…LVSHQAATTA (165 aa)) is DNA-binding region. An SF3 helicase domain is found at 401–551 (VNILSFLIVL…MPFLDDGSPM (151 aa)). Position 427–434 (427–434 (GPPDTGKS)) interacts with ATP. A Glycyl lysine isopeptide (Lys-Gly) (interchain with G-Cter in SUMO) cross-link involves residue K508. The tract at residues 573–598 (TDPEEESNGVPSRAFRCTSRSNSDSY) is disordered.

It belongs to the papillomaviridae E1 protein family. In terms of assembly, can form hexamers. Interacts with E2 protein; this interaction increases E1 DNA binding specificity. Interacts with host DNA polymerase subunit POLA2. Interacts with host single stranded DNA-binding protein RPA1. Interacts with host TOP1; this interaction stimulates the enzymatic activity of TOP1. Phosphorylated. In terms of processing, sumoylated.

It localises to the host nucleus. It carries out the reaction Couples ATP hydrolysis with the unwinding of duplex DNA by translocating in the 3'-5' direction.. It catalyses the reaction ATP + H2O = ADP + phosphate + H(+). In terms of biological role, ATP-dependent DNA 3'-5' helicase required for initiation of viral DNA replication. It forms a complex with the viral E2 protein. The E1-E2 complex binds to the replication origin which contains binding sites for both proteins. During the initial step, a dimer of E1 interacts with a dimer of protein E2 leading to a complex that binds the viral origin of replication with high specificity. Then, a second dimer of E1 displaces the E2 dimer in an ATP-dependent manner to form the E1 tetramer. Following this, two E1 monomers are added to each half of the site, which results in the formation of two E1 trimers on the viral ori. Subsequently, two hexamers will be created. The double hexamer acts as a bi-directional helicase machinery and unwinds the viral DNA and then recruits the host DNA polymerase to start replication. In Human papillomavirus 65, this protein is Replication protein E1.